The following is a 425-amino-acid chain: tRNA(Met) cytidine acetate ligase (425 aa).

ATP-binding positions include 7–20, Gly-102, Asn-162, and 187–188; these read VVEYNPFHFGHLHH and RI.

Belongs to the TmcAL family.

It is found in the cytoplasm. The enzyme catalyses cytidine(34) in elongator tRNA(Met) + acetate + ATP = N(4)-acetylcytidine(34) in elongator tRNA(Met) + AMP + diphosphate. Functionally, catalyzes the formation of N(4)-acetylcytidine (ac(4)C) at the wobble position of elongator tRNA(Met), using acetate and ATP as substrates. First activates an acetate ion to form acetyladenylate (Ac-AMP) and then transfers the acetyl group to tRNA to form ac(4)C34. The protein is tRNA(Met) cytidine acetate ligase of Fervidobacterium nodosum (strain ATCC 35602 / DSM 5306 / Rt17-B1).